We begin with the raw amino-acid sequence, 245 residues long: Octanoyltransferase (245 aa).

Residues 54–242 (KTAHEQVWLL…AFEKIFGPTI (189 aa)) enclose the BPL/LPL catalytic domain. Substrate-binding positions include 93 to 100 (RGGEFTYH), 173 to 175 (AIG), and 186 to 188 (GVS). Cys204 acts as the Acyl-thioester intermediate in catalysis.

It belongs to the LipB family.

Its subcellular location is the cytoplasm. The catalysed reaction is octanoyl-[ACP] + L-lysyl-[protein] = N(6)-octanoyl-L-lysyl-[protein] + holo-[ACP] + H(+). Its pathway is protein modification; protein lipoylation via endogenous pathway; protein N(6)-(lipoyl)lysine from octanoyl-[acyl-carrier-protein]: step 1/2. In terms of biological role, catalyzes the transfer of endogenously produced octanoic acid from octanoyl-acyl-carrier-protein onto the lipoyl domains of lipoate-dependent enzymes. Lipoyl-ACP can also act as a substrate although octanoyl-ACP is likely to be the physiological substrate. This chain is Octanoyltransferase, found in Bartonella tribocorum (strain CIP 105476 / IBS 506).